The sequence spans 408 residues: Pleckstrin homology domain-containing family O member 1 (408 aa).

Residues 1–21 are disordered; the sequence is MKKSGSGKRGPPDGNHQSAAP. Positions 20–131 constitute a PH domain; the sequence is APEKVGWVRK…WINALSSAIT (112 aa). An interaction with capping proteins (CPs) region spans residues 132–192; it reads RAKNRILDEV…MLTLDLIQEE (61 aa). An interaction with ATM, CKIP, IFP35 and NMI region spans residues 135–307; that stretch reads NRILDEVTVE…PAQPGQLSRI (173 aa). A disordered region spans residues 217–264; that stretch reads LAGSRRRADSDRIQPSSQRASSLSRPWEKPDKGAPYTPQALKKFPSTE. Ser226 carries the phosphoserine modification. A compositionally biased stretch (polar residues) spans 229 to 240; the sequence is IQPSSQRASSLS. Phosphoserine is present on residues Ser270 and Ser341. Residues 307-408 are negative regulator of AP-1 activity; the sequence is IQDLVARKLE…QHSQYRKSLM (102 aa). Disordered stretches follow at residues 325–348 and 389–408; these read VQGL…SESE and TPDS…KSLM. A compositionally biased stretch (polar residues) spans 389–401; it reads TPDSHLRQTSQHS.

Heterodimer or homodimer. Interacts with CK2 and actin capping subunits (capping protein CP-alpha and CP-beta). CKIP1 and CK2 together inhibit the activity of actin capping protein at the barbed ends of actin filaments. Interacts with ATM, IFP35, JUN, JUND, NMI and PI3K. Interacts with AKT1, AKT2 and AKT3 (each isozyme of PKB), PtdIns(3,5)P2, PtdIns(4,5)P2 and PtdIns(3,4,5)P2. C-terminal fragments could be released during apoptosis via caspase-3-dependent cleavage.

It localises to the cell membrane. The protein resides in the nucleus. It is found in the cytoplasm. Functionally, plays a role in the regulation of the actin cytoskeleton through its interactions with actin capping protein (CP). May function to target CK2 to the plasma membrane thereby serving as an adapter to facilitate the phosphorylation of CP by protein kinase 2 (CK2). Appears to target ATM to the plasma membrane. Appears to also inhibit tumor cell growth by inhibiting AKT-mediated cell-survival. Also implicated in PI3K-regulated muscle differentiation, the regulation of AP-1 activity (plasma membrane bound AP-1 regulator that translocates to the nucleus) and the promotion of apoptosis induced by tumor necrosis factor TNF. When bound to PKB, it inhibits it probably by decreasing PKB level of phosphorylation. The sequence is that of Pleckstrin homology domain-containing family O member 1 (Plekho1) from Mus musculus (Mouse).